Here is a 113-residue protein sequence, read N- to C-terminus: DNA-binding protein PTO0204 (113 aa).

This sequence belongs to the PDCD5 family.

The sequence is that of DNA-binding protein PTO0204 from Picrophilus torridus (strain ATCC 700027 / DSM 9790 / JCM 10055 / NBRC 100828 / KAW 2/3).